The sequence spans 329 residues: Carbohydrate sulfotransferase chst-1 (329 aa).

Residues 1-3 (MLK) are Cytoplasmic-facing. The helical; Signal-anchor for type II membrane protein transmembrane segment at 4-23 (WFIISCCLLTAISYSTYYLF) threads the bilayer. The Lumenal segment spans residues 24–329 (TSNSWIKTVK…FDFDTTFINS (306 aa)). Residues 91–97 (KKSMSTL) and 157–165 (RDPIARFIS) each bind 3'-phosphoadenylyl sulfate.

This sequence belongs to the sulfotransferase 2 family. As to expression, highly expressed in the head and tail of hermaphrodites, in particular in amphid and phasmid sheath cells.

It is found in the golgi apparatus membrane. The enzyme catalyses chondroitin beta-D-glucuronate + n 3'-phosphoadenylyl sulfate = chondroitin 4'-sulfate + n adenosine 3',5'-bisphosphate + n H(+). Functionally, catalyzes the transfer of sulfate to position 4 of non-reducing N-acetylgalactosamine (GalNAc) residue of chondroitin. This Caenorhabditis elegans protein is Carbohydrate sulfotransferase chst-1.